A 244-amino-acid polypeptide reads, in one-letter code: tRNA pseudouridine synthase A (244 aa).

The Nucleophile role is filled by aspartate 52. Residue tyrosine 110 coordinates substrate.

The protein belongs to the tRNA pseudouridine synthase TruA family. Homodimer.

The catalysed reaction is uridine(38/39/40) in tRNA = pseudouridine(38/39/40) in tRNA. In terms of biological role, formation of pseudouridine at positions 38, 39 and 40 in the anticodon stem and loop of transfer RNAs. The protein is tRNA pseudouridine synthase A of Geotalea daltonii (strain DSM 22248 / JCM 15807 / FRC-32) (Geobacter daltonii).